Reading from the N-terminus, the 151-residue chain is uncharacterized protein (151 aa).

Residues glutamine 40–glycine 57 show a composition bias toward polar residues. Positions glutamine 40–isoleucine 125 are disordered. A compositionally biased stretch (low complexity) spans glutamine 83 to threonine 110.

This is an uncharacterized protein from Bacillus subtilis (strain 168).